The primary structure comprises 501 residues: Pyruvate dehydrogenase protein X component, mitochondrial (501 aa).

The transit peptide at Met1–Gln53 directs the protein to the mitochondrion. The region spanning Pro56–Val132 is the Lipoyl-binding domain. An N6-lipoyllysine modification is found at Lys97. The tract at residues Lys145 to His176 is disordered. Residues Ala149 to Pro169 are compositionally biased toward pro residues. The Peripheral subunit-binding (PSBD) domain maps to Arg183–Val220. Lys194 carries the post-translational modification N6-acetyllysine. Phosphoserine is present on Ser196. The disordered stretch occupies residues Ile228–Pro256. Lys394 carries the post-translational modification N6-succinyllysine.

This sequence belongs to the 2-oxoacid dehydrogenase family. In terms of assembly, part of the inner core of the multimeric pyruvate dehydrogenase complex that is composed of about 48 DLAT and 12 PDHX molecules. This core binds multiple copies of pyruvate dehydrogenase (subunits PDH1A and PDHB, E1), dihydrolipoamide acetyltransferase (DLAT, E2) and lipoamide dehydrogenase (DLD, E3). Interacts with SIRT4. Interacts with DLD. Delipoylated at Lys-97 by SIRT4, delipoylation decreases the PHD complex activity.

Its subcellular location is the mitochondrion matrix. Functionally, required for anchoring dihydrolipoamide dehydrogenase (E3) to the dihydrolipoamide transacetylase (E2) core of the pyruvate dehydrogenase complexes of eukaryotes. This specific binding is essential for a functional PDH complex. This chain is Pyruvate dehydrogenase protein X component, mitochondrial (Pdhx), found in Mus musculus (Mouse).